Here is a 286-residue protein sequence, read N- to C-terminus: Protein PXR1 (286 aa).

Residues 1–20 (MGLAGTKVKQRFGLDPRNTS) form a disordered region. Residues 25-71 (KSRFGHRYLESMGWAPGKGLGLVEHATTTHVKVSVKDDTVGLGAKLA) enclose the G-patch domain. Positions 148 to 255 (EDESEVNFKS…PRKHDQISNV (108 aa)) are disordered. Residues 168 to 198 (PSRDSTSHAKRMRGDESKKSTRDQSKQERKE) are compositionally biased toward basic and acidic residues. Residues 199–230 (KKIKTEKKEKKEKKEKKEKKEKKEKKEKKEKK) show a composition bias toward basic residues.

This sequence belongs to the PINX1 family.

Its subcellular location is the nucleus. It is found in the nucleolus. Functionally, involved in rRNA-processing at A0, A1 and A2 sites and negatively regulates telomerase. This Meyerozyma guilliermondii (strain ATCC 6260 / CBS 566 / DSM 6381 / JCM 1539 / NBRC 10279 / NRRL Y-324) (Yeast) protein is Protein PXR1 (PXR1).